Reading from the N-terminus, the 173-residue chain is Dual-action ribosomal maturation protein DarP (173 aa).

This sequence belongs to the DarP family.

Its subcellular location is the cytoplasm. Its function is as follows. Member of a network of 50S ribosomal subunit biogenesis factors which assembles along the 30S-50S interface, preventing incorrect 23S rRNA structures from forming. Promotes peptidyl transferase center (PTC) maturation. The protein is Dual-action ribosomal maturation protein DarP of Pseudomonas putida (strain W619).